Reading from the N-terminus, the 404-residue chain is N-acetylglucosamine-6-phosphate deacetylase (404 aa).

Residue E143 coordinates a divalent metal cation. Residue 154–155 (AH) coordinates substrate. The a divalent metal cation site is built by H211 and H232. Residues 235–236 (NA), R243, and 269–272 (DGIH) each bind substrate. The Proton donor/acceptor role is filled by D294. A substrate-binding site is contributed by 328–330 (LSG).

The protein belongs to the metallo-dependent hydrolases superfamily. NagA family. A divalent metal cation is required as a cofactor.

The catalysed reaction is N-acetyl-D-glucosamine 6-phosphate + H2O = D-glucosamine 6-phosphate + acetate. It participates in amino-sugar metabolism; N-acetylneuraminate degradation. Hydrolyzes the N-glycolyl group from N-glycolylglucosamine 6-phosphate (GlcNGc-6-P) in the N-glycolylneuraminic acid (Neu5Gc) degradation pathway. This chain is N-acetylglucosamine-6-phosphate deacetylase (amdhd2), found in Danio rerio (Zebrafish).